Reading from the N-terminus, the 94-residue chain is Pyrimidine/purine nucleoside phosphorylase (94 aa).

It belongs to the nucleoside phosphorylase PpnP family.

The enzyme catalyses a purine D-ribonucleoside + phosphate = a purine nucleobase + alpha-D-ribose 1-phosphate. It catalyses the reaction adenosine + phosphate = alpha-D-ribose 1-phosphate + adenine. The catalysed reaction is cytidine + phosphate = cytosine + alpha-D-ribose 1-phosphate. It carries out the reaction guanosine + phosphate = alpha-D-ribose 1-phosphate + guanine. The enzyme catalyses inosine + phosphate = alpha-D-ribose 1-phosphate + hypoxanthine. It catalyses the reaction thymidine + phosphate = 2-deoxy-alpha-D-ribose 1-phosphate + thymine. The catalysed reaction is uridine + phosphate = alpha-D-ribose 1-phosphate + uracil. It carries out the reaction xanthosine + phosphate = alpha-D-ribose 1-phosphate + xanthine. Its function is as follows. Catalyzes the phosphorolysis of diverse nucleosides, yielding D-ribose 1-phosphate and the respective free bases. Can use uridine, adenosine, guanosine, cytidine, thymidine, inosine and xanthosine as substrates. Also catalyzes the reverse reactions. This is Pyrimidine/purine nucleoside phosphorylase from Pseudomonas putida (strain W619).